The primary structure comprises 81 residues: ATP synthase subunit c (81 aa).

The next 2 helical transmembrane spans lie at 4-24 and 57-77; these read MIAQGALIGGGLIMAGGAIGA and VGLVEAAYFINLAFMALFVFA.

It belongs to the ATPase C chain family. As to quaternary structure, F-type ATPases have 2 components, F(1) - the catalytic core - and F(0) - the membrane proton channel. F(1) has five subunits: alpha(3), beta(3), gamma(1), delta(1), epsilon(1). F(0) has three main subunits: a(1), b(2) and c(10-14). The alpha and beta chains form an alternating ring which encloses part of the gamma chain. F(1) is attached to F(0) by a central stalk formed by the gamma and epsilon chains, while a peripheral stalk is formed by the delta and b chains.

It is found in the cell membrane. Its function is as follows. F(1)F(0) ATP synthase produces ATP from ADP in the presence of a proton or sodium gradient. F-type ATPases consist of two structural domains, F(1) containing the extramembraneous catalytic core and F(0) containing the membrane proton channel, linked together by a central stalk and a peripheral stalk. During catalysis, ATP synthesis in the catalytic domain of F(1) is coupled via a rotary mechanism of the central stalk subunits to proton translocation. In terms of biological role, key component of the F(0) channel; it plays a direct role in translocation across the membrane. A homomeric c-ring of between 10-14 subunits forms the central stalk rotor element with the F(1) delta and epsilon subunits. This chain is ATP synthase subunit c, found in Mycobacterium leprae (strain TN).